A 704-amino-acid chain; its full sequence is UvrABC system protein C (704 aa).

The tract at residues M1–A77 is disordered. Positions V49 to A66 are enriched in acidic residues. Over residues E67–A77 the composition is skewed to low complexity. A GIY-YIG domain is found at T92–V170. The UVR domain maps to R280 to I315.

Belongs to the UvrC family. In terms of assembly, interacts with UvrB in an incision complex.

Its subcellular location is the cytoplasm. In terms of biological role, the UvrABC repair system catalyzes the recognition and processing of DNA lesions. UvrC both incises the 5' and 3' sides of the lesion. The N-terminal half is responsible for the 3' incision and the C-terminal half is responsible for the 5' incision. The chain is UvrABC system protein C from Rhodopseudomonas palustris (strain ATCC BAA-98 / CGA009).